Consider the following 198-residue polypeptide: FMN-dependent NADH:quinone oxidoreductase (198 aa).

Met-92–Leu-95 contributes to the FMN binding site.

The protein belongs to the azoreductase type 1 family. In terms of assembly, homodimer. It depends on FMN as a cofactor.

The enzyme catalyses 2 a quinone + NADH + H(+) = 2 a 1,4-benzosemiquinone + NAD(+). It catalyses the reaction N,N-dimethyl-1,4-phenylenediamine + anthranilate + 2 NAD(+) = 2-(4-dimethylaminophenyl)diazenylbenzoate + 2 NADH + 2 H(+). Its function is as follows. Quinone reductase that provides resistance to thiol-specific stress caused by electrophilic quinones. Functionally, also exhibits azoreductase activity. Catalyzes the reductive cleavage of the azo bond in aromatic azo compounds to the corresponding amines. This chain is FMN-dependent NADH:quinone oxidoreductase, found in Clostridium beijerinckii (strain ATCC 51743 / NCIMB 8052) (Clostridium acetobutylicum).